The sequence spans 194 residues: dCTP deaminase (194 aa).

DCTP is bound by residues Arg110–Arg115, Asp128, Val136–Glu138, Tyr171, Lys178, and Gln182. The active-site Proton donor/acceptor is Glu138. Residues Lys175–Asp194 form a disordered region. Residues Lys180–Asp194 show a composition bias toward polar residues.

Belongs to the dCTP deaminase family. In terms of assembly, homotrimer.

The catalysed reaction is dCTP + H2O + H(+) = dUTP + NH4(+). The protein operates within pyrimidine metabolism; dUMP biosynthesis; dUMP from dCTP (dUTP route): step 1/2. Its function is as follows. Catalyzes the deamination of dCTP to dUTP. This is dCTP deaminase from Actinobacillus pleuropneumoniae serotype 5b (strain L20).